A 647-amino-acid chain; its full sequence is DNA mismatch repair protein MutL (647 aa).

It belongs to the DNA mismatch repair MutL/HexB family.

Functionally, this protein is involved in the repair of mismatches in DNA. It is required for dam-dependent methyl-directed DNA mismatch repair. May act as a 'molecular matchmaker', a protein that promotes the formation of a stable complex between two or more DNA-binding proteins in an ATP-dependent manner without itself being part of a final effector complex. The polypeptide is DNA mismatch repair protein MutL (Bacillus cereus (strain Q1)).